A 188-amino-acid polypeptide reads, in one-letter code: Putative manganese efflux pump MntP (188 aa).

6 helical membrane passes run 3 to 23 (LFSL…VSIC), 39 to 59 (AGLY…LLGV), 65 to 85 (ITDY…VNML), 110 to 130 (LGFA…FLSV), 131 to 151 (DIYS…IIGV), and 167 to 187 (ILGG…HTLF).

The protein belongs to the MntP (TC 9.B.29) family.

It localises to the cell inner membrane. In terms of biological role, probably functions as a manganese efflux pump. The protein is Putative manganese efflux pump MntP of Mannheimia succiniciproducens (strain KCTC 0769BP / MBEL55E).